Here is a 521-residue protein sequence, read N- to C-terminus: Maturase K (521 aa).

It belongs to the intron maturase 2 family. MatK subfamily.

Its subcellular location is the plastid. In terms of biological role, usually encoded in the trnK tRNA gene intron. Probably assists in splicing its own and other chloroplast group II introns. This chain is Maturase K, found in Cuscuta exaltata (Tall dodder).